The following is a 192-amino-acid chain: Imidazole glycerol phosphate synthase subunit HisH (192 aa).

A Glutamine amidotransferase type-1 domain is found at 1 to 192; it reads MIAIIDYGLG…QALKGGFIND (192 aa). Residue Cys-77 is the Nucleophile of the active site. Catalysis depends on residues His-169 and Glu-171.

Heterodimer of HisH and HisF.

The protein resides in the cytoplasm. The catalysed reaction is 5-[(5-phospho-1-deoxy-D-ribulos-1-ylimino)methylamino]-1-(5-phospho-beta-D-ribosyl)imidazole-4-carboxamide + L-glutamine = D-erythro-1-(imidazol-4-yl)glycerol 3-phosphate + 5-amino-1-(5-phospho-beta-D-ribosyl)imidazole-4-carboxamide + L-glutamate + H(+). It catalyses the reaction L-glutamine + H2O = L-glutamate + NH4(+). The protein operates within amino-acid biosynthesis; L-histidine biosynthesis; L-histidine from 5-phospho-alpha-D-ribose 1-diphosphate: step 5/9. IGPS catalyzes the conversion of PRFAR and glutamine to IGP, AICAR and glutamate. The HisH subunit catalyzes the hydrolysis of glutamine to glutamate and ammonia as part of the synthesis of IGP and AICAR. The resulting ammonia molecule is channeled to the active site of HisF. The chain is Imidazole glycerol phosphate synthase subunit HisH from Staphylococcus epidermidis (strain ATCC 35984 / DSM 28319 / BCRC 17069 / CCUG 31568 / BM 3577 / RP62A).